We begin with the raw amino-acid sequence, 37 residues long: Hemextin B (37 aa).

In terms of assembly, heterotetramer composed of 2 hemextin A and 2 hemextin B chains; non-covalently linked. Does not exist as a complex in the crude venom. In terms of processing, may contain several disulfide bonds. Expressed by the venom gland.

The protein resides in the secreted. Hemextin B (monomer): does not show anticoagulant activity. Seems only to synergitically enhance hemextin A activity. In terms of biological role, hemextin AB complex: specifically inhibits the activation of FX (F10) by the TF-FVIIa complex (extrinsic tenase complex (ETC)) (IC(50)= 100 nM, Ki=50 nM) by non-competitively inhibiting the enzymatic activity of FVIIa. This chain is Hemextin B, found in Hemachatus haemachatus (Rinkhals).